Here is a 405-residue protein sequence, read N- to C-terminus: Phosphopentomutase (405 aa).

Mn(2+) contacts are provided by D10, D305, H310, D346, H347, and H358.

It belongs to the phosphopentomutase family. It depends on Mn(2+) as a cofactor.

It localises to the cytoplasm. It catalyses the reaction 2-deoxy-alpha-D-ribose 1-phosphate = 2-deoxy-D-ribose 5-phosphate. It carries out the reaction alpha-D-ribose 1-phosphate = D-ribose 5-phosphate. Its pathway is carbohydrate degradation; 2-deoxy-D-ribose 1-phosphate degradation; D-glyceraldehyde 3-phosphate and acetaldehyde from 2-deoxy-alpha-D-ribose 1-phosphate: step 1/2. Its function is as follows. Isomerase that catalyzes the conversion of deoxy-ribose 1-phosphate (dRib-1-P) and ribose 1-phosphate (Rib-1-P) to deoxy-ribose 5-phosphate (dRib-5-P) and ribose 5-phosphate (Rib-5-P), respectively. This chain is Phosphopentomutase, found in Methylobacterium sp. (strain 4-46).